Here is a 447-residue protein sequence, read N- to C-terminus: UPF0210 protein Lreu_0940 (447 aa).

The protein belongs to the UPF0210 family. Homodimer.

This chain is UPF0210 protein Lreu_0940, found in Limosilactobacillus reuteri (strain DSM 20016) (Lactobacillus reuteri).